We begin with the raw amino-acid sequence, 595 residues long: Phytoene desaturase (595 aa).

The N-terminal stretch at 1–23 is a signal peptide; the sequence is MAETQRPRSAIIVGAGAGGIAVA. Residues 574 to 594 traverse the membrane as a helical segment; it reads SQRAFPLLVALMGVLYFLLFV.

It belongs to the carotenoid/retinoid oxidoreductase family. NAD(+) is required as a cofactor.

The protein resides in the membrane. It catalyses the reaction 15-cis-phytoene + A = all-trans-phytofluene + AH2. The enzyme catalyses all-trans-phytofluene + A = all-trans-zeta-carotene + AH2. The catalysed reaction is all-trans-zeta-carotene + A = all-trans-neurosporene + AH2. It carries out the reaction all-trans-neurosporene + A = all-trans-lycopene + AH2. It catalyses the reaction all-trans-lycopene + A = all-trans-3,4-didehydrolycopene + AH2. Its pathway is carotenoid biosynthesis; lycopene biosynthesis. Its function is as follows. Phytoene desaturase involved in the carotenoid biosynthesis pathway. Converts phytoene into 3,4-didehydrolycopene via the intermediates phytofluene, zeta-carotene, neurosporene and lycopene, by introducing up to five double bonds into phytoene. Is also able to desaturate 1-hydroxyneurosporene into 1-hydroxylycopene and 1-hydroxylycopene into 1-hydroxy-3,4-didehydrolycopene. Gamma-carotene and 1,19-dihydroxylycopene are not accepted as substrates. Neurosporaxanthin is synthesized from geranyl-geranyl pyrophosphate (GGPP) through several enzymatic activities. Phytoene synthase activity performed by the bifunctional enzyme al-2 first produces phytoene from geranyl-geranyl pyrophosphate (GGPP). The phytoene dehydrogenase al-1 then introduces 5 desaturations to lead to 3,4-didehydrolycopene via the intermediates phytofluene, zeta-carotene, neurosporene and lycopene. Al-2 cyclase activity then converts 3,4-didehydrolycopene into torulene. Al-2 can also convet lycopene into gamma-carotene which in turn is converted to beta-carotene by an additional al-2 cyclization reaction. Torulene is the substrate of the dioxidase cao-2 that breaks the molecule, removing five carbon atoms to yield beta-apo-4'-carotenal, whereas the aldehyde dehydrogenase ylo-1 mediates the last step by converting beta-apo-4'-carotenal into neurosporaxanthin. This chain is Phytoene desaturase, found in Neurospora crassa (strain ATCC 24698 / 74-OR23-1A / CBS 708.71 / DSM 1257 / FGSC 987).